A 496-amino-acid polypeptide reads, in one-letter code: Guanosine-5'-triphosphate,3'-diphosphate pyrophosphatase (496 aa).

The protein belongs to the GppA/Ppx family. GppA subfamily.

The catalysed reaction is guanosine 3'-diphosphate 5'-triphosphate + H2O = guanosine 3',5'-bis(diphosphate) + phosphate + H(+). It participates in purine metabolism; ppGpp biosynthesis; ppGpp from GTP: step 2/2. Its function is as follows. Catalyzes the conversion of pppGpp to ppGpp. Guanosine pentaphosphate (pppGpp) is a cytoplasmic signaling molecule which together with ppGpp controls the 'stringent response', an adaptive process that allows bacteria to respond to amino acid starvation, resulting in the coordinated regulation of numerous cellular activities. The polypeptide is Guanosine-5'-triphosphate,3'-diphosphate pyrophosphatase (Aeromonas salmonicida (strain A449)).